Reading from the N-terminus, the 269-residue chain is NAD kinase (269 aa).

Residue D45 is the Proton acceptor of the active site. NAD(+)-binding positions include 45 to 46 (DG), 122 to 123 (NE), R149, D151, and A186.

This sequence belongs to the NAD kinase family. A divalent metal cation is required as a cofactor.

It is found in the cytoplasm. The catalysed reaction is NAD(+) + ATP = ADP + NADP(+) + H(+). Its function is as follows. Involved in the regulation of the intracellular balance of NAD and NADP, and is a key enzyme in the biosynthesis of NADP. Catalyzes specifically the phosphorylation on 2'-hydroxyl of the adenosine moiety of NAD to yield NADP. The protein is NAD kinase of Staphylococcus saprophyticus subsp. saprophyticus (strain ATCC 15305 / DSM 20229 / NCIMB 8711 / NCTC 7292 / S-41).